A 620-amino-acid polypeptide reads, in one-letter code: Chaperone protein HscA homolog (620 aa).

The protein belongs to the heat shock protein 70 family.

Its function is as follows. Chaperone involved in the maturation of iron-sulfur cluster-containing proteins. Has a low intrinsic ATPase activity which is markedly stimulated by HscB. This Acinetobacter baumannii (strain SDF) protein is Chaperone protein HscA homolog.